We begin with the raw amino-acid sequence, 542 residues long: MEQNLPSRITKLIKKSESGDFASSYQLYKVFGSKEYGVEPDEKMSDYFKELSAKQLEGGQLRVADIHLENYKGFESLIMDFSMKKNSTILVGNNGCGKSTILDAIQKGLTHLSSRLSTRSHNGDGIEKHELRKGQNYASIAINYDYMGIRFPMIIATTEPGYEDRAKSNYSGINELGSIFKTAHSINPNVSFPLIAMYTVERANDVSTRDIENSEEIKEAQIWDKFKAYNKSLTGKADFKLFFRWFKELIEIENSDNADITALRAEIRAKEKDLDNPLLKALLAENKNSETTKKLLEDHQNSLKVLKEKLNSYYSVNSKTLHTVEDAMYSFLPGFSNLKLQRAPLDLIVDKNNVSLSVLQLSQGEKTILALIADIARRLTLLNPNSVNPLDGTGIVLIDEIDLHLHPSWQQNIIPRLEKTFKNIQFIVTTHSPQVCHTIDSQNIWLLKNGQKFKAPKGVRGAISSWVLENLFEVAQRPPEDKYTKLLQEYKNLVFSEKYASEDARKLGATLSQHFGPDDETLVELKLEIEKRIWEDDFEKDQ.

Residues 92-99 (GNNGCGKS) carry the ATP-binding motif.

Its function is as follows. Probable ATPase component of antiviral defense system retron Ec83, composed of a non-coding RNA (ncRNA), a reverse transcriptase (RT), this protein and a putative HNH endonuclease. Expression of retron Ec83 confers protection against bacteriophage T2, T4 and T6. At multiplicity of infection (MOI) of 0.02 cultures slow growth when infected with T4 but do not collapse, at MOI 2 cultures enter growth stasis. This chain is Retron Ec83 probable ATPase, found in Escherichia coli.